Here is a 130-residue protein sequence, read N- to C-terminus: Small ribosomal subunit protein uS8 (130 aa).

It belongs to the universal ribosomal protein uS8 family.

This Candida glabrata (strain ATCC 2001 / BCRC 20586 / JCM 3761 / NBRC 0622 / NRRL Y-65 / CBS 138) (Yeast) protein is Small ribosomal subunit protein uS8 (RPS22).